The following is a 70-amino-acid chain: Large ribosomal subunit protein uL29 (70 aa).

It belongs to the universal ribosomal protein uL29 family.

In Clostridium botulinum (strain Eklund 17B / Type B), this protein is Large ribosomal subunit protein uL29.